The chain runs to 367 residues: Probable peptidoglycan glycosyltransferase FtsW (367 aa).

The next 9 helical transmembrane spans lie at 32–52 (LIFI…PMKF), 57–77 (AFWG…PGIG), 87–107 (IPIG…MIVF), 119–139 (IHGL…CFLL), 149–169 (MVVV…FALF), 171–191 (LLFL…PWRM), 251–271 (VVGE…FVLL), 296–316 (GVVV…FGVF), and 323–343 (LPFI…FGLL).

This sequence belongs to the SEDS family. FtsW subfamily.

Its subcellular location is the cell inner membrane. It carries out the reaction [GlcNAc-(1-&gt;4)-Mur2Ac(oyl-L-Ala-gamma-D-Glu-L-Lys-D-Ala-D-Ala)](n)-di-trans,octa-cis-undecaprenyl diphosphate + beta-D-GlcNAc-(1-&gt;4)-Mur2Ac(oyl-L-Ala-gamma-D-Glu-L-Lys-D-Ala-D-Ala)-di-trans,octa-cis-undecaprenyl diphosphate = [GlcNAc-(1-&gt;4)-Mur2Ac(oyl-L-Ala-gamma-D-Glu-L-Lys-D-Ala-D-Ala)](n+1)-di-trans,octa-cis-undecaprenyl diphosphate + di-trans,octa-cis-undecaprenyl diphosphate + H(+). Its pathway is cell wall biogenesis; peptidoglycan biosynthesis. In terms of biological role, peptidoglycan polymerase that is essential for cell division. The protein is Probable peptidoglycan glycosyltransferase FtsW of Taylorella equigenitalis (strain MCE9).